The chain runs to 100 residues: Integration host factor subunit alpha (100 aa).

The tract at residues 53 to 72 (FDLRDKRQRPGRNPKTGEEI) is disordered.

It belongs to the bacterial histone-like protein family. In terms of assembly, heterodimer of an alpha and a beta chain.

Its function is as follows. This protein is one of the two subunits of integration host factor, a specific DNA-binding protein that functions in genetic recombination as well as in transcriptional and translational control. The sequence is that of Integration host factor subunit alpha from Pseudomonas entomophila (strain L48).